An 828-amino-acid chain; its full sequence is Glycerol-3-phosphate acyltransferase 1, mitochondrial (828 aa).

Topologically, residues 1 to 87 (MEESSVTIGT…FFNPSIPSLG (87 aa)) are cytoplasmic. The segment at 80-120 (NPSIPSLGLRNVIYINETHTRHRGWLARRLSYILFVQERDV) is important for mitochondrial localization. The stretch at 88–118 (LRNVIYINETHTRHRGWLARRLSYILFVQER) is an intramembrane region. Over 119-828 (DVHKGMFATS…LEYILSFVVL (710 aa)) the chain is Cytoplasmic. The short motif at 230 to 235 (HRSHID) is the HXXXXD motif element. Residues arginine 278, arginine 279, lysine 288, arginine 293, and arginine 328 each contribute to the CoA site. A Phosphoserine modification is found at serine 380. CoA is bound at residue arginine 462. A phosphoserine mark is found at serine 688 and serine 695. An N6-acetyllysine mark is found at lysine 780 and lysine 784.

Belongs to the GPAT/DAPAT family.

It localises to the mitochondrion outer membrane. The catalysed reaction is sn-glycerol 3-phosphate + an acyl-CoA = a 1-acyl-sn-glycero-3-phosphate + CoA. It catalyses the reaction sn-glycerol 3-phosphate + hexadecanoyl-CoA = 1-hexadecanoyl-sn-glycero-3-phosphate + CoA. It carries out the reaction (9Z,12Z)-octadecadienoyl-CoA + sn-glycerol 3-phosphate = 1-(9Z,12Z)-octadecadienoyl-sn-glycero-3-phosphate + CoA. The enzyme catalyses sn-glycerol 3-phosphate + (9Z)-octadecenoyl-CoA = 1-(9Z-octadecenoyl)-sn-glycero-3-phosphate + CoA. The catalysed reaction is sn-glycerol 3-phosphate + octadecanoyl-CoA = 1-octadecanoyl-sn-glycero-3-phosphate + CoA. It catalyses the reaction dodecanoyl-CoA + sn-glycerol 3-phosphate = 1-dodecanoyl-sn-glycerol 3-phosphate + CoA. It carries out the reaction 1-acyl-sn-glycero-3-phospho-(1'-sn-glycerol) + an acyl-CoA = a 1,2-diacyl-sn-glycero-3-phospho-(1'-sn-glycerol) + CoA. It functions in the pathway phospholipid metabolism; CDP-diacylglycerol biosynthesis; CDP-diacylglycerol from sn-glycerol 3-phosphate: step 1/3. Mitochondrial membrane protein that catalyzes the essential first step of biosynthesis of glycerolipids such as triglycerides, phosphatidic acids and lysophosphatidic acids. Esterifies acyl-group from acyl-coenzyme A (acyl-CoA) to the sn-1 position of glycerol-3-phosphate, to produce lysophosphatidic acid. Has a narrow hydrophobic binding cleft that selects for a linear acyl chain. Catalytic activity is higher for substrates with a 16-carbon acyl chain. This is Glycerol-3-phosphate acyltransferase 1, mitochondrial from Rattus norvegicus (Rat).